Here is a 55-residue protein sequence, read N- to C-terminus: Large ribosomal subunit protein bL33 (55 aa).

Belongs to the bacterial ribosomal protein bL33 family.

The chain is Large ribosomal subunit protein bL33 from Rhodopseudomonas palustris (strain HaA2).